Reading from the N-terminus, the 277-residue chain is Large ribosomal subunit protein uL2 (277 aa).

Residues 222–277 (GVTMNPVDHPHGGGEGRTSGGRNPVTPWGFPTKGKKTRNNKATDKFIVSSRHKRKK) are disordered.

It belongs to the universal ribosomal protein uL2 family. Part of the 50S ribosomal subunit. Forms a bridge to the 30S subunit in the 70S ribosome.

Functionally, one of the primary rRNA binding proteins. Required for association of the 30S and 50S subunits to form the 70S ribosome, for tRNA binding and peptide bond formation. It has been suggested to have peptidyltransferase activity; this is somewhat controversial. Makes several contacts with the 16S rRNA in the 70S ribosome. This Xanthobacter autotrophicus (strain ATCC BAA-1158 / Py2) protein is Large ribosomal subunit protein uL2.